A 1634-amino-acid polypeptide reads, in one-letter code: Protein TIC 214 (1634 aa).

Helical transmembrane passes span 25–45, 53–73, 94–116, 133–153, and 172–192; these read FIIG…YVAL, ILAL…SFFA, HFIL…LITI, FAWF…LVWI, and IFVI…SIQC. Disordered stretches follow at residues 216 to 242 and 1365 to 1395; these read RERL…SESE and QQKS…STKS. The span at 1386-1395 shows a compositional bias: basic and acidic residues; sequence KYLEEDSTKS.

It belongs to the TIC214 family. As to quaternary structure, part of the Tic complex.

It is found in the plastid. Its subcellular location is the chloroplast inner membrane. Involved in protein precursor import into chloroplasts. May be part of an intermediate translocation complex acting as a protein-conducting channel at the inner envelope. The chain is Protein TIC 214 from Cuscuta exaltata (Tall dodder).